Here is a 2238-residue protein sequence, read N- to C-terminus: Protein Ycf2 (2238 aa).

1579 to 1586 (GSIGTGRS) serves as a coordination point for ATP.

Belongs to the Ycf2 family.

Its subcellular location is the plastid. Functionally, probable ATPase of unknown function. Its presence in a non-photosynthetic plant (Epifagus virginiana) and experiments in tobacco indicate that it has an essential function which is probably not related to photosynthesis. The sequence is that of Protein Ycf2 from Cuscuta exaltata (Tall dodder).